The following is a 391-amino-acid chain: Alanine racemase (391 aa).

K38 acts as the Proton acceptor; specific for D-alanine in catalysis. K38 carries the post-translational modification N6-(pyridoxal phosphate)lysine. Position 136 (R136) interacts with substrate. The Proton acceptor; specific for L-alanine role is filled by Y267. M315 provides a ligand contact to substrate.

Belongs to the alanine racemase family. Pyridoxal 5'-phosphate serves as cofactor.

It carries out the reaction L-alanine = D-alanine. It participates in amino-acid biosynthesis; D-alanine biosynthesis; D-alanine from L-alanine: step 1/1. In terms of biological role, catalyzes the interconversion of L-alanine and D-alanine. May also act on other amino acids. The sequence is that of Alanine racemase (alr) from Clostridium kluyveri (strain ATCC 8527 / DSM 555 / NBRC 12016 / NCIMB 10680 / K1).